Consider the following 225-residue polypeptide: UPF0758 protein Shal_0429 (225 aa).

The 123-residue stretch at isoleucine 102–isoleucine 224 folds into the MPN domain. The Zn(2+) site is built by histidine 173, histidine 175, and aspartate 186. The short motif at histidine 173–aspartate 186 is the JAMM motif element.

Belongs to the UPF0758 family.

This is UPF0758 protein Shal_0429 from Shewanella halifaxensis (strain HAW-EB4).